The primary structure comprises 152 residues: MATLEQRLTDLLEAPVVALGFELWGIEFIRAGNHSTLRVFIDGENGVTVENCAEVSHQVGAIMDVEDPITEEYFLEVSSPGLDRPLFKVAQFEKYVGQEAAVQLRMATNNRRKFKGVIKAVQGDMITLTVDGKDDVLAFTNIQKANIVPNFG.

The protein belongs to the RimP family.

The protein localises to the cytoplasm. In terms of biological role, required for maturation of 30S ribosomal subunits. This chain is Ribosome maturation factor RimP, found in Aeromonas salmonicida (strain A449).